Reading from the N-terminus, the 199-residue chain is Holliday junction branch migration complex subunit RuvA (199 aa).

The segment at methionine 1–leucine 65 is domain I. The tract at residues aspartate 66–phenylalanine 144 is domain II. The flexible linker stretch occupies residues phenylalanine 144–alanine 148. Positions glycine 149–arginine 199 are domain III.

This sequence belongs to the RuvA family. As to quaternary structure, homotetramer. Forms an RuvA(8)-RuvB(12)-Holliday junction (HJ) complex. HJ DNA is sandwiched between 2 RuvA tetramers; dsDNA enters through RuvA and exits via RuvB. An RuvB hexamer assembles on each DNA strand where it exits the tetramer. Each RuvB hexamer is contacted by two RuvA subunits (via domain III) on 2 adjacent RuvB subunits; this complex drives branch migration. In the full resolvosome a probable DNA-RuvA(4)-RuvB(12)-RuvC(2) complex forms which resolves the HJ.

The protein localises to the cytoplasm. Its function is as follows. The RuvA-RuvB-RuvC complex processes Holliday junction (HJ) DNA during genetic recombination and DNA repair, while the RuvA-RuvB complex plays an important role in the rescue of blocked DNA replication forks via replication fork reversal (RFR). RuvA specifically binds to HJ cruciform DNA, conferring on it an open structure. The RuvB hexamer acts as an ATP-dependent pump, pulling dsDNA into and through the RuvAB complex. HJ branch migration allows RuvC to scan DNA until it finds its consensus sequence, where it cleaves and resolves the cruciform DNA. The sequence is that of Holliday junction branch migration complex subunit RuvA from Legionella pneumophila (strain Paris).